A 128-amino-acid polypeptide reads, in one-letter code: Large ribosomal subunit protein bL20c (128 aa).

This sequence belongs to the bacterial ribosomal protein bL20 family.

The protein resides in the plastid. It is found in the chloroplast. In terms of biological role, binds directly to 23S ribosomal RNA and is necessary for the in vitro assembly process of the 50S ribosomal subunit. It is not involved in the protein synthesizing functions of that subunit. The polypeptide is Large ribosomal subunit protein bL20c (Daucus carota (Wild carrot)).